Here is a 300-residue protein sequence, read N- to C-terminus: uncharacterized protein (300 aa).

The segment covering 1–11 has biased composition (polar residues); that stretch reads MYNEGVTSPSQ. A disordered region spans residues 1–20; it reads MYNEGVTSPSQLARKKNATD. Residues 1–92 constitute a DNA-binding region (recombinase); the sequence is MYNEGVTSPS…QEILITRKRR (92 aa). Residues 162 to 249 adopt a coiled-coil conformation; it reads SKENYFKELS…DLEFQKIEKE (88 aa).

This is an uncharacterized protein from Bacillus subtilis (strain 168).